We begin with the raw amino-acid sequence, 113 residues long: Phosphoribosyl-ATP pyrophosphatase (113 aa).

The protein belongs to the PRA-PH family.

It localises to the cytoplasm. The enzyme catalyses 1-(5-phospho-beta-D-ribosyl)-ATP + H2O = 1-(5-phospho-beta-D-ribosyl)-5'-AMP + diphosphate + H(+). Its pathway is amino-acid biosynthesis; L-histidine biosynthesis; L-histidine from 5-phospho-alpha-D-ribose 1-diphosphate: step 2/9. This chain is Phosphoribosyl-ATP pyrophosphatase, found in Hydrogenovibrio crunogenus (strain DSM 25203 / XCL-2) (Thiomicrospira crunogena).